Consider the following 931-residue polypeptide: MRKGLRATAARCGLGLGYLLQMLVLPALALLSASGTGSAAQDDDFFHELPETFPSDPPEPLPHFLIEPEEAYIVKNKPVNLYCKASPATQIYFKCNSEWVHQKDHIVDERVDETSGLIVREVSIEISRQQVEELFGPEDYWCQCVAWSSAGTTKSRKAYVRIAYLRKTFEQEPLGKEVSLEQEVLLQCRPPEGIPVAEVEWLKNEDIIDPVEDRNFYITIDHNLIIKQARLSDTANYTCVAKNIVAKRKSTTATVIVYVNGGWSTWTEWSVCNSRCGRGYQKRTRTCTNPAPLNGGAFCEGQSVQKIACTTLCPVDGRWTPWSKWSTCGTECTHWRRRECTAPAPKNGGKDCDGLVLQSKNCTDGLCMQTAPDSDDVALYVGIVIAVIVCLAISVVVALFVYRKNHRDFESDIIDSSALNGGFQPVNIKAARQDLLAVPPDLTSAAAMYRGPVYALHDVSDKIPMTNSPILDPLPNLKIKVYNTSGAVTPQDDLSEFTSKLSPQMTQSLLENEALSLKNQSLARQTDPSCTAFGSFNSLGGHLIVPNSGVSLLIPAGAIPQGRVYEMYVTVHRKETMRPPMDDSQTLLTPVVSCGPPGALLTRPVVLTMHHCADPNTEDWKILLKNQAAQGQWEDVVVVGEENFTTPCYIQLDAEACHILTENLSTYALVGHSTTKAAAKRLKLAIFGPLCCSSLEYSIRVYCLDDTQDALKEILHLERQMGGQLLEEPKALHFKGSTHNLRLSIHDIAHSLWKSKLLAKYQEIPFYHVWSGSQRNLHCTFTLERFSLNTVELVCKLCVRQVEGEGQIFQLNCTVSEEPTGIDLPLLDPANTITTVTGPSAFSIPLPIRQKLCSSLDAPQTRGHDWRMLAHKLNLDRYLNYFATKSSPTGVILDLWEAQNFPDGNLSMLAAVLEEMGRHETVVSLAAEGQY.

An N-terminal signal peptide occupies residues Met1 to Ala40. At Gln41–Tyr380 the chain is on the extracellular side. The 98-residue stretch at Pro62 to Tyr159 folds into the Ig-like domain. Cystine bridges form between Cys83/Cys144, Cys95/Cys142, Cys188/Cys239, Cys272/Cys309, Cys276/Cys313, Cys287/Cys299, Cys328/Cys362, Cys332/Cys367, and Cys340/Cys352. An Ig-like C2-type domain is found at Arg161–Ile256. Residue Asn236 is glycosylated (N-linked (GlcNAc...) asparagine). TSP type-1 domains lie at Asn260–Pro314 and Asp316–Met368. The N-linked (GlcNAc...) asparagine glycan is linked to Asn361. The chain crosses the membrane as a helical span at residues Val381–Val401. At Tyr402 to Tyr931 the chain is on the cytoplasmic side. The required for netrin-mediated axon repulsion of neuronal growth cones stretch occupies residues Tyr402–Tyr931. Ser502 is subject to Phosphoserine. The 144-residue stretch at Cys530–Ser673 folds into the ZU5 domain. At Tyr568 the chain carries Phosphotyrosine. An interaction with DCC region spans residues Ser694 to Lys712. The region spanning Gln850–Gly929 is the Death domain.

The protein belongs to the unc-5 family. In terms of assembly, interacts with DCC (via cytoplasmic domain). Interacts (tyrosine phosphorylated form) with PTPN11. Interacts (via extracellular domain) with FLRT3 (via extracellular domain). Interacts (via Ig-like C2-type domain) with DSCAM (via extracellular domain). Interacts (via death domain) with DAPK1. Interacts (via cytoplasmic domain) with TUBB3; this interaction is decreased by NTN1/Netrin-1. Proteolytically cleaved by caspases during apoptosis. The cleavage does not take place when the receptor is associated with netrin ligand. Its cleavage by caspases is required to induce apoptosis. In terms of processing, phosphorylated on different cytoplasmic tyrosine residues. Phosphorylation of Tyr-568 leads to an interaction with PTPN11 phosphatase, suggesting that its activity is regulated by phosphorylation/dephosphorylation. Tyrosine phosphorylation is netrin-dependent. As to expression, mainly expressed in brain. Expressed in temporal lobe cortical neurons and in neurons of the hippocampal pyramidal layer. Also expressed in kidney. Not expressed in developing or adult lung.

The protein resides in the cell membrane. The protein localises to the cell surface. It localises to the synapse. It is found in the synaptosome. Its subcellular location is the cell projection. The protein resides in the axon. The protein localises to the dendrite. It localises to the growth cone. It is found in the lamellipodium. Its subcellular location is the filopodium. Its function is as follows. Receptor for netrin required for axon guidance. Mediates axon repulsion of neuronal growth cones in the developing nervous system upon ligand binding. NTN1/Netrin-1 binding might cause dissociation of UNC5C from polymerized TUBB3 in microtubules and thereby lead to increased microtubule dynamics and axon repulsion. Axon repulsion in growth cones may also be caused by its association with DCC that may trigger signaling for repulsion. Might also collaborate with DSCAM in NTN1-mediated axon repulsion independently of DCC. Also involved in corticospinal tract axon guidance independently of DCC. Involved in dorsal root ganglion axon projection towards the spinal cord. It also acts as a dependence receptor required for apoptosis induction when not associated with netrin ligand. The chain is Netrin receptor UNC5C (UNC5C) from Homo sapiens (Human).